The primary structure comprises 28 residues: 3-phytase B (28 aa).

Residues 1 to 28 (RDPTGCEVDQVIMVKRHGERYPSPSAGK) form a disordered region. The active-site Nucleophile is the H17.

This sequence belongs to the histidine acid phosphatase family.

The enzyme catalyses 1D-myo-inositol hexakisphosphate + H2O = 1D-myo-inositol 1,2,4,5,6-pentakisphosphate + phosphate. Catalyzes the hydrolysis of inorganic orthophosphate from phytate. The sequence is that of 3-phytase B (phyB) from Aspergillus ficuum.